We begin with the raw amino-acid sequence, 174 residues long: Inactive signal peptidase IA (174 aa).

At 1-7 (MKKVVKY) the chain is on the cytoplasmic side. A helical transmembrane segment spans residues 8–28 (LISLILAIIIVLFVQTFVIVG). Residues 29–174 (HVIPNNDMSP…FSKWTVQFKS (146 aa)) are Extracellular-facing.

This sequence belongs to the peptidase S26 family.

It is found in the cell membrane. Catalytically inactive. The protein is Inactive signal peptidase IA (spsA) of Staphylococcus aureus (strain COL).